A 449-amino-acid chain; its full sequence is MALPIVAVVGRPNVGKSTFVNRLAGERDAIVHDEPGVTRDRTYRPAFWQDREFLVVDTGGLVFDDDSDFLPLIRQQAELALQEATAAIFVVDGQAGPTALDYEIAAWLRQLSLPVLVAVNKCESRQMGQVQAAEFWSLGLGEPYPISSIHGSGTGELLDQLITYLPAGETLPEAPEIQVAIAGRPNVGKSSLLNALIGSDRAIVSPISGTTRDAIDTVIEHGGTQYRFIDTAGIRKRTHVAYGPEMFSVHRAFKAIHRSDVVLLVLDALEEITEQDQRLAGHIADQGRACVLIVNKWDAVLDKDTYTINAYRDRLYQRLHFLEWADALFVSAHTGQRLEKIFAAVDAAVEQHRRRVTTAVVNDVIQEALHWHTPPATRQGRQGKIYYATQVATQPPTFAIFVNDAKLFKENYRRYIESQIRQQLGFRGTPIRLLWRSKKPREAAELVAR.

2 consecutive EngA-type G domains span residues 4-169 (PIVA…PAGE) and 177-353 (IQVA…EQHR). GTP is bound by residues 10–17 (GRPNVGKS), 57–61 (DTGGL), 120–123 (NKCE), 183–190 (GRPNVGKS), 230–234 (DTAGI), and 295–298 (NKWD). A KH-like domain is found at 354–439 (RRVTTAVVND…PIRLLWRSKK (86 aa)).

This sequence belongs to the TRAFAC class TrmE-Era-EngA-EngB-Septin-like GTPase superfamily. EngA (Der) GTPase family. In terms of assembly, associates with the 50S ribosomal subunit.

In terms of biological role, GTPase that plays an essential role in the late steps of ribosome biogenesis. This is GTPase Der from Thermosynechococcus vestitus (strain NIES-2133 / IAM M-273 / BP-1).